The primary structure comprises 319 residues: 1-aminocyclopropane-1-carboxylate oxidase 1 (319 aa).

One can recognise a Fe2OG dioxygenase domain in the interval 153 to 253; sequence PNFGTKVSNY…RMSLASFYNP (101 aa). 3 residues coordinate Fe cation: His177, Asp179, and His234.

It belongs to the iron/ascorbate-dependent oxidoreductase family. It depends on Fe cation as a cofactor.

The enzyme catalyses 1-aminocyclopropane-1-carboxylate + L-ascorbate + O2 = ethene + L-dehydroascorbate + hydrogen cyanide + CO2 + 2 H2O. Its pathway is alkene biosynthesis; ethylene biosynthesis via S-adenosyl-L-methionine; ethylene from S-adenosyl-L-methionine: step 2/2. The sequence is that of 1-aminocyclopropane-1-carboxylate oxidase 1 (ACO1) from Petunia hybrida (Petunia).